The chain runs to 114 residues: Putative membrane protein insertion efficiency factor (114 aa).

The protein belongs to the UPF0161 family.

The protein localises to the cell inner membrane. Functionally, could be involved in insertion of integral membrane proteins into the membrane. This Wolinella succinogenes (strain ATCC 29543 / DSM 1740 / CCUG 13145 / JCM 31913 / LMG 7466 / NCTC 11488 / FDC 602W) (Vibrio succinogenes) protein is Putative membrane protein insertion efficiency factor.